A 415-amino-acid chain; its full sequence is MSGMEKLQNASWIYQQKLEDPFQKHLNSTEEYLAFLCGPRRSHFFLPVSVVYVPIFVVGVIGNVLVCLVILQHQAMKTPTNYYLFSLAVSDLLVLLLGMPLEVYEMWRNYPFLFGPVGCYFKTALFETVCFASILSITTVSVERYVAILHPFRAKLQSTRRRALRILGIVWGFSVLFSLPNTSIHGIKFHYFPNGSLVPGSATCTVIKPMWIYNFIIQVTSFLFYLLPMTVISVLYYLMALRLKKDKSLEADEGNANIQRPCRKSVNKMLFVLVLVFAICWAPFHIDRLFFSFVEEWSESLAAVFNLVHVVSGVFFYLSSAVNPIIYNLLSRRFQAAFQNVISSFHKQWHSQHDPQLPPAQRNIFLTECHFVELTEDIGPQFPCQSSMHNSHLPAALSSEQMSRTNYQSFHFNKT.

Residues 1–49 (MSGMEKLQNASWIYQQKLEDPFQKHLNSTEEYLAFLCGPRRSHFFLPVS) lie on the Extracellular side of the membrane. 2 N-linked (GlcNAc...) asparagine glycosylation sites follow: Asn9 and Asn27. The chain crosses the membrane as a helical span at residues 50–70 (VVYVPIFVVGVIGNVLVCLVI). The Cytoplasmic segment spans residues 71-82 (LQHQAMKTPTNY). Residues 83-103 (YLFSLAVSDLLVLLLGMPLEV) form a helical membrane-spanning segment. The Extracellular segment spans residues 104-123 (YEMWRNYPFLFGPVGCYFKT). A disulfide bridge connects residues Cys119 and Cys204. Residues 124-146 (ALFETVCFASILSITTVSVERYV) form a helical membrane-spanning segment. At 147 to 165 (AILHPFRAKLQSTRRRALR) the chain is on the cytoplasmic side. A helical transmembrane segment spans residues 166 to 186 (ILGIVWGFSVLFSLPNTSIHG). Topologically, residues 187–214 (IKFHYFPNGSLVPGSATCTVIKPMWIYN) are extracellular. Residue Asn194 is glycosylated (N-linked (GlcNAc...) asparagine). A helical membrane pass occupies residues 215 to 235 (FIIQVTSFLFYLLPMTVISVL). Residues 236–265 (YYLMALRLKKDKSLEADEGNANIQRPCRKS) are Cytoplasmic-facing. Residues 266 to 286 (VNKMLFVLVLVFAICWAPFHI) traverse the membrane as a helical segment. The Extracellular portion of the chain corresponds to 287–301 (DRLFFSFVEEWSESL). The chain crosses the membrane as a helical span at residues 302–322 (AAVFNLVHVVSGVFFYLSSAV). The Cytoplasmic portion of the chain corresponds to 323 to 415 (NPIIYNLLSR…NYQSFHFNKT (93 aa)).

The protein belongs to the G-protein coupled receptor 1 family. Predominantly expressed in the CNS, particularly in the medulla oblongata, pontine reticular formation, spinal cord, and thalamus. High level in testis whereas lower levels are present in a variety of peripheral tissues including the gastrointestinal tract, genitourinary tract, liver, pancreas, adrenal gland, thyroid gland, lung, trachea, spleen and thymus.

The protein localises to the cell membrane. Its function is as follows. Receptor for the neuromedin-U and neuromedin-S neuropeptides. The polypeptide is Neuromedin-U receptor 2 (NMUR2) (Homo sapiens (Human)).